The following is a 500-amino-acid chain: L-arabinose isomerase (500 aa).

Mn(2+) is bound by residues E306, E333, H350, and H450.

Belongs to the arabinose isomerase family. Homohexamer. It depends on Mn(2+) as a cofactor.

The catalysed reaction is beta-L-arabinopyranose = L-ribulose. The protein operates within carbohydrate degradation; L-arabinose degradation via L-ribulose; D-xylulose 5-phosphate from L-arabinose (bacterial route): step 1/3. In terms of biological role, catalyzes the conversion of L-arabinose to L-ribulose. The sequence is that of L-arabinose isomerase from Salmonella typhi.